A 224-amino-acid chain; its full sequence is UPF0173 metal-dependent hydrolase TTHA1283 (224 aa).

It belongs to the UPF0173 family.

This chain is UPF0173 metal-dependent hydrolase TTHA1283, found in Thermus thermophilus (strain ATCC 27634 / DSM 579 / HB8).